Here is a 97-residue protein sequence, read N- to C-terminus: Co-chaperonin GroES (97 aa).

This sequence belongs to the GroES chaperonin family. As to quaternary structure, heptamer of 7 subunits arranged in a ring. Interacts with the chaperonin GroEL.

Its subcellular location is the cytoplasm. Its function is as follows. Together with the chaperonin GroEL, plays an essential role in assisting protein folding. The GroEL-GroES system forms a nano-cage that allows encapsulation of the non-native substrate proteins and provides a physical environment optimized to promote and accelerate protein folding. GroES binds to the apical surface of the GroEL ring, thereby capping the opening of the GroEL channel. The sequence is that of Co-chaperonin GroES from Pseudomonas aeruginosa (strain LESB58).